The chain runs to 280 residues: MNELRLLGPAEIRDLAELIGVAPTKRLGQNFVIDANTVRRIVRVAGVEAGEVVVEVGPGLGSLTLGLLEAGARVVAVEIDGRLAERLPLTVAQLAPEAAGRLTVVHSDALAVTELPERPGRLVANLPYNVSVPVLLHLLERVPSLRSGVVMVQAEVGQRIAAGPGSKVYGAPSVKAAWYGVWRTAGTVSRQIFWPVPNVDSILVGFERHATEPGDDELRKRTFALVDAAFQQRRKTLRQSLAPVYGDPAAAGAALEAAGVAPRRRGEQLTLADFVRLAAR.

Residues Asn30, Val32, Gly57, Glu78, Asp108, and Asn125 each contribute to the S-adenosyl-L-methionine site.

It belongs to the class I-like SAM-binding methyltransferase superfamily. rRNA adenine N(6)-methyltransferase family. RsmA subfamily.

The protein resides in the cytoplasm. It catalyses the reaction adenosine(1518)/adenosine(1519) in 16S rRNA + 4 S-adenosyl-L-methionine = N(6)-dimethyladenosine(1518)/N(6)-dimethyladenosine(1519) in 16S rRNA + 4 S-adenosyl-L-homocysteine + 4 H(+). Functionally, specifically dimethylates two adjacent adenosines (A1518 and A1519) in the loop of a conserved hairpin near the 3'-end of 16S rRNA in the 30S particle. May play a critical role in biogenesis of 30S subunits. This chain is Ribosomal RNA small subunit methyltransferase A, found in Leifsonia xyli subsp. xyli (strain CTCB07).